We begin with the raw amino-acid sequence, 1368 residues long: MAP3K epsilon protein kinase 1 (1368 aa).

In terms of domain architecture, Protein kinase spans 20 to 274 (YMLGDEIGKG…AKTLLSHPWI (255 aa)). HEAT repeat units follow at residues 25–62 (EIGKGAYGRVYKGLDLENGDFVAIKQVSLENIVQEDLN) and 86–125 (SKTKTHLHIILEYVENGSLANIIKPNKFGPFPESLVAVYI). ATP contacts are provided by residues 26–34 (IGKGAYGRV) and K49. The Proton acceptor role is filled by D144. Residues 218–256 (PYYDLQPMPALFRIVQDDNPPIPDSLSPDITDFLRQCFK) form an HEAT 3 repeat. 2 disordered regions span residues 296 to 415 (EATA…KNTS) and 430 to 507 (QTSH…PVAD). Residues 351–364 (LGEEGTDNSEDDIM) show a composition bias toward acidic residues. Composition is skewed to basic and acidic residues over residues 388–399 (SDFHGKSERGET) and 470–486 (SLHDLFHPLDKVSEGKP). The segment covering 488–502 (EASTSMPTSNVNQGD) has biased composition (polar residues). 5 HEAT repeats span residues 533–571 (SNDGGDLFRLMMGVLKDDVIDIDGLVFDEKVPAENLFPL), 628–653 (IPKSRVICAVLQLINEIIKDNTDFQE), 654–695 (NACL…SSPL), 699–737 (MFIACRGIPVLVGFLEADYAKYREMVHLAIDGMWQVFKL), and 750–788 (AAKNGILLRLINTLYSLNEATRLASISGGLDGQAPRVRS). The interval 777-883 (GGLDGQAPRV…ISLSANRTST (107 aa)) is disordered. The segment covering 791-808 (LDPNNPIFGQNETSSLSM) has biased composition (polar residues). Composition is skewed to basic and acidic residues over residues 813-826 (DVLKTRHGGGEEPS) and 836-852 (SDVHQPDALHPDGDKPR). HEAT repeat units follow at residues 903-940 (EQVRPLLSLLDKEPPSRHYSGQLDYVKHITGIERHESR), 1025-1063 (ATSSGLLAHMVSTLSADVAREYLEKVADLLLEFARADTT), 1067-1105 (YMCSQSLLSRLFQMFNRVEPPILLKILECTNHLSTDPNC), 1112-1150 (ADAIKHLIPNLELKDGHLVYQIHHEVLSALFNLCKINKR), 1154-1191 (QAAENGIIPHLMLFIMSDSPLKQYALPLLCDMAHASRN), 1196-1234 (LRAHGGLDVYLSLLDDEYWSVIALDSIAVCLAQDNDNRK), 1258-1281 (RHFVHILEPFLKIITKSYRINKTL), 1282-1318 (AVNGLTPLLISRLDHQDAIARLNLLKLIKAVYEHHPR), and 1348-1368 (QVLVKQMATSLLKALHINTIL).

It belongs to the protein kinase superfamily. Ser/Thr protein kinase family. As to quaternary structure, interacts with SGP1. In terms of processing, autophosphorylated. As to expression, expressed in both the sporophytic and the gametophytic tissues, especially in dividing cells. Mostly present in flower buds and mature flowers. Also accumulates in embryos, in roots apices, trichomes and ovule integuments.

It is found in the cytoplasm. The protein localises to the cytoskeleton. The protein resides in the microtubule organizing center. It localises to the nucleus. Its subcellular location is the nucleolus. It is found in the cell membrane. The enzyme catalyses L-seryl-[protein] + ATP = O-phospho-L-seryl-[protein] + ADP + H(+). The catalysed reaction is L-threonyl-[protein] + ATP = O-phospho-L-threonyl-[protein] + ADP + H(+). Functionally, serine/threonine-protein kinase involved in the spatial and temporal control system organizing cortical activities in mitotic and postmitotic cells. Required for the normal functioning of the plasma membrane in developing pollen. Involved in the regulation of cell expansion, cell elongation, and embryo development. This chain is MAP3K epsilon protein kinase 1, found in Arabidopsis thaliana (Mouse-ear cress).